Here is a 133-residue protein sequence, read N- to C-terminus: Aspartate 1-decarboxylase (133 aa).

Catalysis depends on Ser-26, which acts as the Schiff-base intermediate with substrate; via pyruvic acid. Ser-26 carries the pyruvic acid (Ser) modification. Thr-58 is a binding site for substrate. Tyr-59 serves as the catalytic Proton donor. Residue 74 to 76 coordinates substrate; that stretch reads GAA.

The protein belongs to the PanD family. As to quaternary structure, heterooctamer of four alpha and four beta subunits. It depends on pyruvate as a cofactor. Post-translationally, is synthesized initially as an inactive proenzyme, which is activated by self-cleavage at a specific serine bond to produce a beta-subunit with a hydroxyl group at its C-terminus and an alpha-subunit with a pyruvoyl group at its N-terminus.

It is found in the cytoplasm. The enzyme catalyses L-aspartate + H(+) = beta-alanine + CO2. Its pathway is cofactor biosynthesis; (R)-pantothenate biosynthesis; beta-alanine from L-aspartate: step 1/1. In terms of biological role, catalyzes the pyruvoyl-dependent decarboxylation of aspartate to produce beta-alanine. This chain is Aspartate 1-decarboxylase, found in Legionella pneumophila (strain Lens).